The sequence spans 211 residues: Ras-related protein rab-11.1 (211 aa).

18-26 (GDSGVGKSN) provides a ligand contact to GTP. The Effector region signature appears at 40 to 48 (SKSTIGVEF). GTP is bound by residues 66-70 (DTAGQ), 124-127 (NKSD), and 154-156 (SAL). The tract at residues 187 to 211 (GYGGGSGTIIPSPASDPPKKQCCIP) is disordered. 2 S-geranylgeranyl cysteine lipidation sites follow: Cys208 and Cys209.

This sequence belongs to the small GTPase superfamily. Rab family. Interacts with rei-1 and rei-2. The GDP-form preferentially binds to rei-1 and rei-2. In terms of tissue distribution, expressed weakly in sperm, but more predominantly in oocytes. Expressed in the intestine.

It is found in the cytoplasmic vesicle. It localises to the secretory vesicle. The protein localises to the endosome. Its subcellular location is the cytoplasm. The protein resides in the cytoskeleton. It is found in the spindle. It localises to the microtubule organizing center. The protein localises to the spindle pole body. Its subcellular location is the centrosome. The protein resides in the apical cell membrane. It is found in the cytosol. It localises to the recycling endosome membrane. The protein localises to the golgi apparatus membrane. Its subcellular location is the cytoplasmic granule. In terms of biological role, the small GTPases Rab are key regulators of intracellular membrane trafficking, from the formation of transport vesicles to their fusion with membranes. Rabs cycle between an inactive GDP-bound form and an active GTP-bound form that is able to recruit to membranes different set of downstream effectors directly responsible for vesicle formation, movement, tethering and fusion. Involved in regulating the meiotic maturation of oocytes. Plays a role in egg shell formation, regulating exocytosis of chondroitin proteoglycans following fertilization. Controls cortical granule localization and targets them to the plasma membrane for exocytosis. Acts as a major regulator of membrane delivery during cytokinesis. Regulates the cytoskeleton by facilitating astral microtubule elongation and organization during metaphase to ensure proper spindle alignment and polarity in the first embryonic cell division. Maintains normal endoplasmic reticulum morphology during metaphase. Involved in vesicle formation and plasma membrane repair following exposure to pore forming toxins. Regulates endocytic recycling. May play a role in yolk receptor endocytosis in growing oocytes. Plays a role in the shedding of pathogen spores from intestinal cells via its involvement in spore fusion and endocytic trafficking. The polypeptide is Ras-related protein rab-11.1 (Caenorhabditis elegans).